A 347-amino-acid polypeptide reads, in one-letter code: Putative adhesin P1-like protein MPN_099 (347 aa).

The span at 282–300 shows a compositional bias: polar residues; that stretch reads FGTDHSTQPQPQSLKTTTP. A disordered region spans residues 282 to 302; that stretch reads FGTDHSTQPQPQSLKTTTPVF.

Belongs to the adhesin P1 family.

The protein is Putative adhesin P1-like protein MPN_099 of Mycoplasma pneumoniae (strain ATCC 29342 / M129 / Subtype 1) (Mycoplasmoides pneumoniae).